The primary structure comprises 199 residues: Holliday junction resolvase RecU (199 aa).

4 residues coordinate Mg(2+): threonine 82, aspartate 84, glutamate 97, and glutamine 116.

It belongs to the RecU family. The cofactor is Mg(2+).

Its subcellular location is the cytoplasm. The enzyme catalyses Endonucleolytic cleavage at a junction such as a reciprocal single-stranded crossover between two homologous DNA duplexes (Holliday junction).. Functionally, endonuclease that resolves Holliday junction intermediates in genetic recombination. Cleaves mobile four-strand junctions by introducing symmetrical nicks in paired strands. Promotes annealing of linear ssDNA with homologous dsDNA. Required for DNA repair, homologous recombination and chromosome segregation. The sequence is that of Holliday junction resolvase RecU from Streptococcus pyogenes serotype M1.